A 422-amino-acid chain; its full sequence is Dihydroorotase (422 aa).

Zn(2+) is bound by residues His-59 and His-61. Substrate is bound by residues 61-63 (HFR) and Asn-93. Asp-150, His-177, and His-230 together coordinate Zn(2+). Asn-276 provides a ligand contact to substrate. Residue Asp-303 coordinates Zn(2+). The active site involves Asp-303. His-307 serves as a coordination point for substrate.

The protein belongs to the metallo-dependent hydrolases superfamily. DHOase family. Class I DHOase subfamily. Zn(2+) serves as cofactor.

It catalyses the reaction (S)-dihydroorotate + H2O = N-carbamoyl-L-aspartate + H(+). It participates in pyrimidine metabolism; UMP biosynthesis via de novo pathway; (S)-dihydroorotate from bicarbonate: step 3/3. Functionally, catalyzes the reversible cyclization of carbamoyl aspartate to dihydroorotate. The polypeptide is Dihydroorotase (Streptococcus pneumoniae serotype 4 (strain ATCC BAA-334 / TIGR4)).